Here is a 468-residue protein sequence, read N- to C-terminus: Histone acetyltransferase type B catalytic subunit (468 aa).

Position 8 is a phosphoserine (Ser-8). 2 interaction with histone H4 N-terminus regions span residues Glu-44 to Glu-46 and Tyr-208 to Phe-210. Acetyl-CoA contacts are provided by residues Phe-248 to Ile-250 and Gln-255 to Ser-261. Glu-283 serves as the catalytic Proton donor/acceptor. The disordered stretch occupies residues Ser-442–Ala-468.

The protein belongs to the HAT1 family. In terms of assembly, component of the HAT-B complex composed of at least HAT1 and HAT2. The HAT-B complex binds to histone H4 tail. In the nucleus, interacts with GSK1 and SSB1. In the cytoplasm, interacts with ATG3 and ATG9. Post-translationally, phosphorylated at Ser-8 by GSK1 in the nucleus which impairs its translocation to the cytoplasm through interfering the interaction between HAT1 and SSB1. Dephosphorylation under nutrient starvation conditions promotes the interaction between HAT1 and SSB1 and results in the translocation of HAT1 from the nucleus to the cytoplasm in order to acetylate ATG3 and ATG9.

The protein localises to the nucleus. The protein resides in the cytoplasm. It localises to the preautophagosomal structure. It carries out the reaction L-lysyl-[protein] + acetyl-CoA = N(6)-acetyl-L-lysyl-[protein] + CoA + H(+). Its function is as follows. Catalytic component of the histone acetylase B (HAT-B) complex. Has intrinsic substrate specificity that modifies lysine in recognition sequence GXGKXG. Involved in DNA double-strand break repair. Required for appressorium turgor pressure, autophagy and conidial nuclear degradation. During the germination process and upon starvation conditions, translocates from the nucleus to the cytoplasm where it acetylates ATG3 at 'lys-262' and 'Lys-267', thus influencing autophagy through controlling ATG3-ATG8 interaction. Also acetylates ATG9 at 'Lys-621' to regulate ATG9 binding to vesicles, which is also important for autophagy and pathogenicity. This is Histone acetyltransferase type B catalytic subunit from Pyricularia oryzae (strain 70-15 / ATCC MYA-4617 / FGSC 8958) (Rice blast fungus).